Here is a 185-residue protein sequence, read N- to C-terminus: Putative lipoprotein LprB (185 aa).

The signal sequence occupies residues 1–24; the sequence is MRRKVRRLTLAVSALVALFPAVAG. Cys25 is lipidated: N-palmitoyl cysteine. A lipid anchor (S-diacylglycerol cysteine) is attached at Cys25. The segment at 26 to 50 is disordered; sequence SDSGDNKPGATIPSTPANAEGRHGP.

The protein localises to the cell membrane. The chain is Putative lipoprotein LprB (lprB) from Mycobacterium tuberculosis (strain CDC 1551 / Oshkosh).